Here is a 468-residue protein sequence, read N- to C-terminus: Neurexin-1-beta (468 aa).

Residues 1–46 form the signal peptide; the sequence is MYQRMLRCGAELGSPGGGSSGGAGGRLALLWIVPLTLSGLLGVAWG. Over 47 to 391 the chain is Extracellular; it reads ASSLGAHHIH…AEVIRESSST (345 aa). The Laminin G-like domain occupies 87–285; sequence YIFSKGGGQI…DANIAIVGNV (199 aa). Asp137 and Val154 together coordinate Ca(2+). The N-linked (GlcNAc...) asparagine glycan is linked to Asn184. An essential for interaction with CBLN1; modulates interaction affinity with NLGN1, NLGN2 and NLGN3; prevents interaction with DAG1/alpha-dystroglycan; modulates interaction with alpha-latrotoxin region spans residues 201-230; it reads GNNDNERLAIARQRIPYRLGRVVDEWLLDK. Residues Ile236 and Asn238 each coordinate Ca(2+). Ser346 carries O-linked (Xyl...) (heparan sulfate) serine glycosylation. The interval 350-381 is disordered; that stretch reads PSDDEDIDPCEPSSGGLANPTRVGGREPYPGS. A helical transmembrane segment spans residues 392-414; the sequence is TGMVVGIVAAAALCILILLYAMY. Over 415-468 the chain is Cytoplasmic; that stretch reads KYRNRDEGSYHVDESRNYISNSAQSNGAVVKEKQPSSAKSANKNKKNKDKEYYV. Residues 435–468 form a disordered region; that stretch reads NSAQSNGAVVKEKQPSSAKSANKNKKNKDKEYYV. 3 positions are modified to phosphoserine: Ser450, Ser451, and Ser454.

This sequence belongs to the neurexin family. In terms of assembly, the cytoplasmic C-terminal region binds to CASK. Binds NLGN1, NLGN2 and NLGN3, DAG1 (alpha-dystroglycan) and alpha-latrotoxin. Binding to neuroligins is calcium-dependent, and the binding preference ranks as follow: NLGN1 &gt; NLGN4 &gt;&gt; NLGN3 &gt; NLGN2. Interacts with CBLN2 and more weakly with CBLN4. Interacts with CBLN1; interaction is CBLN1 hexamer form-dependent; CBLN1-binding is calcium-independent; isoform 1b does not interact with CBLN1. Interacts with CLSTN3. In terms of processing, N-glycosylated. Post-translationally, O-glycosylated; contains heparan sulfate. Heparan sulfate attachment is required for synapse development by mediating interactions with neuroligins. In terms of tissue distribution, brain.

The protein resides in the presynaptic cell membrane. Neuronal cell surface protein involved in cell recognition and cell adhesion by forming intracellular junctions through binding to neuroligins. Plays a role in formation of synaptic junctions. Functions as part of a trans-synaptic complex by binding to cerebellins and postsynaptic GRID1. This interaction helps regulate the activity of NMDA and AMPA receptors at hippocampal synapses without affecting synapse formation. NRXN1B-CBLN2-GRID1 complex transduce presynaptic signals into postsynaptic NMDAR response. This chain is Neurexin-1-beta, found in Rattus norvegicus (Rat).